We begin with the raw amino-acid sequence, 95 residues long: Aspartyl/glutamyl-tRNA(Asn/Gln) amidotransferase subunit C (95 aa).

Belongs to the GatC family. Heterotrimer of A, B and C subunits.

The catalysed reaction is L-glutamyl-tRNA(Gln) + L-glutamine + ATP + H2O = L-glutaminyl-tRNA(Gln) + L-glutamate + ADP + phosphate + H(+). It catalyses the reaction L-aspartyl-tRNA(Asn) + L-glutamine + ATP + H2O = L-asparaginyl-tRNA(Asn) + L-glutamate + ADP + phosphate + 2 H(+). Allows the formation of correctly charged Asn-tRNA(Asn) or Gln-tRNA(Gln) through the transamidation of misacylated Asp-tRNA(Asn) or Glu-tRNA(Gln) in organisms which lack either or both of asparaginyl-tRNA or glutaminyl-tRNA synthetases. The reaction takes place in the presence of glutamine and ATP through an activated phospho-Asp-tRNA(Asn) or phospho-Glu-tRNA(Gln). This is Aspartyl/glutamyl-tRNA(Asn/Gln) amidotransferase subunit C from Chloroherpeton thalassium (strain ATCC 35110 / GB-78).